Consider the following 388-residue polypeptide: Probable proton-coupled zinc antiporter SLC30A3 (388 aa).

Positions Met1 to Lys46 are disordered. The Cytoplasmic portion of the chain corresponds to Met1–Gln75. Residues Leu76–Leu96 traverse the membrane as a helical segment. The Lumenal portion of the chain corresponds to Ala97–Asp105. The chain crosses the membrane as a helical span at residues Ala106–Ser126. 2 residues coordinate Zn(2+): His108 and Asp112. Over Thr127–Gly145 the chain is Cytoplasmic. The helical transmembrane segment at Ala146–Val166 threads the bilayer. The Lumenal portion of the chain corresponds to Arg167–Gly177. Residues Gly178–Leu198 form a helical membrane-spanning segment. The Cytoplasmic portion of the chain corresponds to His199–Ala235. A helical transmembrane segment spans residues Phe236–Ile256. His238 and Asp242 together coordinate Zn(2+). The Lumenal segment spans residues Tyr257–Ala264. The chain crosses the membrane as a helical span at residues Ala265–Leu285. The Cytoplasmic segment spans residues Arg286–Ala388. Residue Tyr357 forms a Dityrosine (Tyr-Tyr) (interchain with Y-372) linkage. Tyr372 is covalently cross-linked (Dityrosine (Tyr-Tyr) (interchain with Y-357)).

It belongs to the cation diffusion facilitator (CDF) transporter (TC 2.A.4) family. SLC30A subfamily. In terms of assembly, homodimer; dityrosine-linked. Homodimerization seems specific of the human protein and enhances the zinc transport efficiency. Interacts with TMEM163. In terms of processing, homodimerization through dityrosine bonds is stimulated by oxidative stress.

The protein localises to the cytoplasmic vesicle. It is found in the secretory vesicle. Its subcellular location is the synaptic vesicle membrane. It localises to the synapse. The protein resides in the synaptosome. The protein localises to the late endosome membrane. It is found in the lysosome membrane. It carries out the reaction Zn(2+)(in) + 2 H(+)(out) = Zn(2+)(out) + 2 H(+)(in). Its function is as follows. Probable proton-coupled zinc ion antiporter mediating the import of zinc from cytoplasm into synaptic vesicles and participating to cellular zinc ion homeostasis in the brain. The polypeptide is Probable proton-coupled zinc antiporter SLC30A3 (Homo sapiens (Human)).